Reading from the N-terminus, the 256-residue chain is MNDQRKGDHAEPTTHFGYQDVPESQKAKKVAEVFHSVAAKYDLMNDVLSGGMHRLWKRFTIELSGVRSGNRVLDIAGGTGDLAAKFSRLVGPTGQVVLADINDSMLKVGRDRLLDRGVAGNIEFVQADAEKLPFPDNHFDCVTIAFGLRNVTHKDAAIRSMLRVLKPGGRLLILEFSKPTNKLMSKAYDAYSFAFMPLAGKLITNDAESYRYLAESIRMHPDQETLKSMMVEAGFDRVTYHNMTSGIVAVHRGIKP.

Basic and acidic residues predominate over residues Met1–Pro12. The tract at residues Met1–Glu23 is disordered. Residues Thr79, Asp100, and Asp128–Ala129 contribute to the S-adenosyl-L-methionine site.

This sequence belongs to the class I-like SAM-binding methyltransferase superfamily. MenG/UbiE family.

The enzyme catalyses a 2-demethylmenaquinol + S-adenosyl-L-methionine = a menaquinol + S-adenosyl-L-homocysteine + H(+). It carries out the reaction a 2-methoxy-6-(all-trans-polyprenyl)benzene-1,4-diol + S-adenosyl-L-methionine = a 5-methoxy-2-methyl-3-(all-trans-polyprenyl)benzene-1,4-diol + S-adenosyl-L-homocysteine + H(+). It functions in the pathway quinol/quinone metabolism; menaquinone biosynthesis; menaquinol from 1,4-dihydroxy-2-naphthoate: step 2/2. It participates in cofactor biosynthesis; ubiquinone biosynthesis. Functionally, methyltransferase required for the conversion of demethylmenaquinol (DMKH2) to menaquinol (MKH2) and the conversion of 2-polyprenyl-6-methoxy-1,4-benzoquinol (DDMQH2) to 2-polyprenyl-3-methyl-6-methoxy-1,4-benzoquinol (DMQH2). This Pseudomonas putida (strain ATCC 700007 / DSM 6899 / JCM 31910 / BCRC 17059 / LMG 24140 / F1) protein is Ubiquinone/menaquinone biosynthesis C-methyltransferase UbiE.